The chain runs to 237 residues: Cyclic nucleotide phosphodiesterase inhibitor (237 aa).

Positions 1–20 (MAKIIISLILLLSLFSFSYG) are cleaved as a signal peptide. N28, N65, and N70 each carry an N-linked (GlcNAc...) asparagine glycan. Cys-rich CT repeat units lie at residues 57–81 (DLCH…CNDN), 82–105 (NPCT…CDPG), 116–139 (DPCT…CNDG), 140–162 (DACT…CDDN), and 163–186 (DPCT…CSIK). Residue N153 is glycosylated (N-linked (GlcNAc...) asparagine). N207 is a glycosylation site (N-linked (GlcNAc...) asparagine).

Its function is as follows. PDI acts by binding stoichiometrically to cyclic nucleotide phosphodiesterase, changing the KM of the enzyme for cAMP from 10 uM to 2 mM. The protein is Cyclic nucleotide phosphodiesterase inhibitor (pdiA) of Dictyostelium discoideum (Social amoeba).